A 471-amino-acid chain; its full sequence is Glutamate--tRNA ligase (471 aa).

The 'HIGH' region signature appears at 9–19 (PSPTGYLHVGG). Zn(2+)-binding residues include Cys98, Cys100, Cys125, and His127. The 'KMSKS' region motif lies at 237 to 241 (KLSKR). Lys240 provides a ligand contact to ATP.

This sequence belongs to the class-I aminoacyl-tRNA synthetase family. Glutamate--tRNA ligase type 1 subfamily. In terms of assembly, monomer. It depends on Zn(2+) as a cofactor.

The protein localises to the cytoplasm. It catalyses the reaction tRNA(Glu) + L-glutamate + ATP = L-glutamyl-tRNA(Glu) + AMP + diphosphate. In terms of biological role, catalyzes the attachment of glutamate to tRNA(Glu) in a two-step reaction: glutamate is first activated by ATP to form Glu-AMP and then transferred to the acceptor end of tRNA(Glu). This chain is Glutamate--tRNA ligase, found in Shigella boydii serotype 18 (strain CDC 3083-94 / BS512).